We begin with the raw amino-acid sequence, 281 residues long: NADPH-dependent 7-cyano-7-deazaguanine reductase (281 aa).

A substrate-binding site is contributed by V81–S83. Residue S83–K84 participates in NADPH binding. The active-site Thioimide intermediate is the C188. The active-site Proton donor is D195. H227–E228 contacts substrate. An NADPH-binding site is contributed by R256–G257.

This sequence belongs to the GTP cyclohydrolase I family. QueF type 2 subfamily. Homodimer.

Its subcellular location is the cytoplasm. It catalyses the reaction 7-aminomethyl-7-carbaguanine + 2 NADP(+) = 7-cyano-7-deazaguanine + 2 NADPH + 3 H(+). Its pathway is tRNA modification; tRNA-queuosine biosynthesis. Its function is as follows. Catalyzes the NADPH-dependent reduction of 7-cyano-7-deazaguanine (preQ0) to 7-aminomethyl-7-deazaguanine (preQ1). The polypeptide is NADPH-dependent 7-cyano-7-deazaguanine reductase (Acidovorax ebreus (strain TPSY) (Diaphorobacter sp. (strain TPSY))).